The sequence spans 215 residues: Ribosomal RNA small subunit methyltransferase G (215 aa).

S-adenosyl-L-methionine is bound by residues Gly-78, Leu-83, 128–129, and Arg-146; that span reads AE.

Belongs to the methyltransferase superfamily. RNA methyltransferase RsmG family.

It localises to the cytoplasm. The catalysed reaction is guanosine(527) in 16S rRNA + S-adenosyl-L-methionine = N(7)-methylguanosine(527) in 16S rRNA + S-adenosyl-L-homocysteine. In terms of biological role, specifically methylates the N7 position of guanine in position 527 of 16S rRNA. The sequence is that of Ribosomal RNA small subunit methyltransferase G from Anaeromyxobacter dehalogenans (strain 2CP-C).